We begin with the raw amino-acid sequence, 401 residues long: MARPDLHGRISSLRKLHVAQDRVRVRRQVGRRDGVRLEIDGRWLTGFCSNDYLGLSQQFEVIAALQDAAARDGAGATASHLICGHHTAHETLEREIAEWLGYPSALLFGNGFIANLAVQQALLSEEDDVCVQDRLNHASLLDATRLAGCRLRRYPHLDVEGAMRQLKGAPEGAAMLASDAVFSMDGDVAPLRALSLVARMQDALFYVDDAHGVGVLGPQGRGCVADAGLGVAEVPLQLVTLGKALGGYGAVVVGDDALVRHLAETARPYIYTTALPPAQVAATLAAVRLARRDDWRRARLVELIAAFRDGARKHGFELMASDTPIQPLLCGEEATVMAMSAALEQAGFMVGAIRPPTVPEGKARLRVTLSALHTPQQVQALIDAIVQARDVVSRQPLRASA.

Arginine 24 provides a ligand contact to substrate. 111-112 contacts pyridoxal 5'-phosphate; it reads GF. Histidine 137 is a substrate binding site. Residues serine 183, histidine 211, and threonine 240 each coordinate pyridoxal 5'-phosphate. An N6-(pyridoxal phosphate)lysine modification is found at lysine 243. Position 357 (threonine 357) interacts with substrate.

It belongs to the class-II pyridoxal-phosphate-dependent aminotransferase family. BioF subfamily. As to quaternary structure, homodimer. Pyridoxal 5'-phosphate is required as a cofactor.

The catalysed reaction is 6-carboxyhexanoyl-[ACP] + L-alanine + H(+) = (8S)-8-amino-7-oxononanoate + holo-[ACP] + CO2. It functions in the pathway cofactor biosynthesis; biotin biosynthesis. In terms of biological role, catalyzes the decarboxylative condensation of pimeloyl-[acyl-carrier protein] and L-alanine to produce 8-amino-7-oxononanoate (AON), [acyl-carrier protein], and carbon dioxide. The chain is 8-amino-7-oxononanoate synthase from Xanthomonas oryzae pv. oryzae (strain MAFF 311018).